The following is a 597-amino-acid chain: Protein kinase C-like 3 (597 aa).

In terms of domain architecture, PB1 spans 12–95 (DIKLKTRFHG…AELNIHVFVG (84 aa)). The Phorbol-ester/DAG-type zinc-finger motif lies at 127–177 (GHRFQGKRLNRRIQCFICHDYIWGIGRQGFRCVDCRLCVHKKCHRHVRTHC). Positions 181–238 (PQGPNVPVAPSSGVGSLRGGRLDTSSSTTRSGGGIDNGAFHEHEIESPGSAKDMSRST) are disordered. The 270-residue stretch at 253–522 (FRLLTVIGRG…LNDMKEHDFF (270 aa)) folds into the Protein kinase domain. ATP contacts are provided by residues 259-267 (IGRGSYAKV) and Lys282. The active-site Proton acceptor is Asp377. The 72-residue stretch at 524-595 (GFIDWEALEQ…VNPLQMSRED (72 aa)) folds into the AGC-kinase C-terminal domain.

Belongs to the protein kinase superfamily. AGC Ser/Thr protein kinase family. PKC subfamily. As to quaternary structure, interaction with par-3 required for the peripheral localization of par-6 and to form a par-3/par-6/pkc-3 complex, which is activated when cdc-42 interacts with par-6. Binds avidly to the phosphotyrosine interaction domain (PID) of a novel pkc-3 adapter protein num-1, which enables tethering and targeting of pkc-3 to the cell periphery. It depends on Mg(2+) as a cofactor.

It localises to the cytoplasm. Its subcellular location is the cytoskeleton. It catalyses the reaction L-seryl-[protein] + ATP = O-phospho-L-seryl-[protein] + ADP + H(+). It carries out the reaction L-threonyl-[protein] + ATP = O-phospho-L-threonyl-[protein] + ADP + H(+). Required for the normal progression of embryogenesis and viability of the organism. Plays an indispensable role in establishing embryonic polarity and in recruiting and maintaining par-6 to the periphery, through interaction with par-3. Required for epithelial cell polarity in the distal spermatheca. Phosphorylates serine residues of num-1. Required for the expression of antimicrobial peptide nlp-29 in response in response to fungal infection or physical injury. This chain is Protein kinase C-like 3, found in Caenorhabditis briggsae.